The chain runs to 1704 residues: Vitellogenin-1 (1704 aa).

A signal peptide spans 1-14; it reads MKAVVLALTLAFVA. The Vitellogenin domain occupies 22 to 660; the sequence is FAAGKTYVYK…DAATFMPKSF (639 aa). 16 N-linked (GlcNAc...) asparagine glycosylation sites follow: Asn-446, Asn-635, Asn-903, Asn-908, Asn-1019, Asn-1054, Asn-1080, Asn-1121, Asn-1174, Asn-1285, Asn-1322, Asn-1375, Asn-1379, Asn-1405, Asn-1456, and Asn-1512. Residues 1078-1109 are compositionally biased toward low complexity; that stretch reads RRNSSSSSSSSSSSSSESRSSRSSSSSSSSSR. The segment at 1078 to 1213 is disordered; the sequence is RRNSSSSSSS…SSDRRSKEVM (136 aa). A compositionally biased stretch (low complexity) spans 1122–1204; that stretch reads SSSSSSSRRS…FSDSSSSSSS (83 aa). Residues 1442 to 1617 form the VWFD domain; that stretch reads AECSFVEDTL…SWILPAESCR (176 aa). Intrachain disulfides connect Cys-1444–Cys-1580 and Cys-1467–Cys-1616.

Phosvitin, an egg yolk storage protein, is one of the most highly phosphorylated (10%) proteins in nature. In terms of processing, the N-terminal of the blood vitellogenin is blocked. Produced by the liver, secreted into the blood and then sequestered by receptor mediated endocytosis into growing oocytes, where it is generally cleaved, giving rise to the respective yolk components composed of complex suite of small cleavage products.

Its function is as follows. Precursor of the major egg-yolk proteins that are sources of nutrients during early development of oviparous organisms. This chain is Vitellogenin-1 (vtg1), found in Fundulus heteroclitus (Killifish).